A 261-amino-acid polypeptide reads, in one-letter code: Indole-3-glycerol phosphate synthase (261 aa).

It belongs to the TrpC family.

It carries out the reaction 1-(2-carboxyphenylamino)-1-deoxy-D-ribulose 5-phosphate + H(+) = (1S,2R)-1-C-(indol-3-yl)glycerol 3-phosphate + CO2 + H2O. The protein operates within amino-acid biosynthesis; L-tryptophan biosynthesis; L-tryptophan from chorismate: step 4/5. This is Indole-3-glycerol phosphate synthase from Campylobacter curvus (strain 525.92).